A 591-amino-acid polypeptide reads, in one-letter code: Formate--tetrahydrofolate ligase (591 aa).

Residue 74–81 (TPLGEGKS) coordinates ATP.

The protein belongs to the formate--tetrahydrofolate ligase family.

The catalysed reaction is (6S)-5,6,7,8-tetrahydrofolate + formate + ATP = (6R)-10-formyltetrahydrofolate + ADP + phosphate. It functions in the pathway one-carbon metabolism; tetrahydrofolate interconversion. This Lawsonia intracellularis (strain PHE/MN1-00) protein is Formate--tetrahydrofolate ligase.